We begin with the raw amino-acid sequence, 264 residues long: Thymidylate synthase (264 aa).

A dUMP-binding site is contributed by Arg21. Position 51 (His51) interacts with (6R)-5,10-methylene-5,6,7,8-tetrahydrofolate. 126–127 (RR) contributes to the dUMP binding site. The active-site Nucleophile is the Cys146. Residues 166 to 169 (RSAD), Asn177, and 207 to 209 (HIY) each bind dUMP. Residue Asp169 coordinates (6R)-5,10-methylene-5,6,7,8-tetrahydrofolate. Position 263 (Ala263) interacts with (6R)-5,10-methylene-5,6,7,8-tetrahydrofolate.

This sequence belongs to the thymidylate synthase family. Bacterial-type ThyA subfamily. In terms of assembly, homodimer.

The protein resides in the cytoplasm. It catalyses the reaction dUMP + (6R)-5,10-methylene-5,6,7,8-tetrahydrofolate = 7,8-dihydrofolate + dTMP. It participates in pyrimidine metabolism; dTTP biosynthesis. Its function is as follows. Catalyzes the reductive methylation of 2'-deoxyuridine-5'-monophosphate (dUMP) to 2'-deoxythymidine-5'-monophosphate (dTMP) while utilizing 5,10-methylenetetrahydrofolate (mTHF) as the methyl donor and reductant in the reaction, yielding dihydrofolate (DHF) as a by-product. This enzymatic reaction provides an intracellular de novo source of dTMP, an essential precursor for DNA biosynthesis. This is Thymidylate synthase from Brucella ovis (strain ATCC 25840 / 63/290 / NCTC 10512).